Reading from the N-terminus, the 34-residue chain is Brevinin-2GHa (34 aa).

A disulfide bridge connects residues Cys27 and Cys33.

In terms of tissue distribution, expressed by the skin glands.

The protein localises to the secreted. In terms of biological role, antimicrobial peptide. Active against the Gram-positive bacteria S.aureus FDA209P (MIC=14.9 ug/ml) and B.subtilis ATCC 6633 (MIC&gt;64 ug/ml), but not active against the Gram-negative bacterium E.coli or the fungus C.albicans. The sequence is that of Brevinin-2GHa from Sylvirana guentheri (Gunther's frog).